The primary structure comprises 305 residues: Acetylglutamate kinase (305 aa).

Residues 67–68, R89, and N190 each bind substrate; that span reads GG.

The protein belongs to the acetylglutamate kinase family. ArgB subfamily.

It localises to the cytoplasm. The enzyme catalyses N-acetyl-L-glutamate + ATP = N-acetyl-L-glutamyl 5-phosphate + ADP. The protein operates within amino-acid biosynthesis; L-arginine biosynthesis; N(2)-acetyl-L-ornithine from L-glutamate: step 2/4. Its function is as follows. Catalyzes the ATP-dependent phosphorylation of N-acetyl-L-glutamate. The chain is Acetylglutamate kinase from Bifidobacterium longum (strain NCC 2705).